Consider the following 83-residue polypeptide: Small ribosomal subunit protein bS16 (83 aa).

Belongs to the bacterial ribosomal protein bS16 family.

The protein is Small ribosomal subunit protein bS16 of Borrelia duttonii (strain Ly).